The primary structure comprises 689 residues: MSEKTFLVEIGTEELPPKALRSLAESFAANFTAELDNAGLAHGTVQWFAAPRRLALKVANLAEAQPDREIEKRGPAIAQAFDAEGKPSKAAEGWARGCGITVDQAERLTTDKGEWLLYRAHVKGESTEALLPNMVATSLAKLPIPKLMRWGASDVHFVRPVHTVTLLLGDKVIPATILGIQSDRVIRGHRFMGEPEFTIDNADQYPEILRERGKVIADYEERKAKIKADAEEAARKIGGNADLSESLLEEVASLVEWPVVLTAKFEEKFLAVPSEALVYTMKGDQKYFPVYANDGKLLPNFIFVANIESKDPQQIISGNEKVVRPRLADAEFFFNTDRKKRLEDNLPRLQTVLFQQQLGTLRDKTDRIQALAGWIAEQIGADVNHATRAGLLSKCDLMTNMVFEFTDTQGVMGMHYARHDGEAEDVAVALNEQYQPRFAGDDLPSNPVACALAIADKMDTLAGIFGIGQHPKGDKDPFALRRAALGVLRIIVEKNLNLDLQTLTEEAVRLYGDKLTNANVVDDVIDFMLGRFRAWYQDEGYTVDTIQAVLARRPTRPADFDARMKAVSHFRTLEAAAALAAANKRVSNILAKSDEVLSDRVNASTLKEPEEIKLAMQVVVLRDKLEPYFAEGRYQDALVELAELREPVDAFFDKVMVMVDDKELRINRLTMLEKLRELFLRVADISLLQ.

Belongs to the class-II aminoacyl-tRNA synthetase family. As to quaternary structure, tetramer of two alpha and two beta subunits.

It localises to the cytoplasm. It catalyses the reaction tRNA(Gly) + glycine + ATP = glycyl-tRNA(Gly) + AMP + diphosphate. This is Glycine--tRNA ligase beta subunit from Escherichia coli O127:H6 (strain E2348/69 / EPEC).